A 179-amino-acid polypeptide reads, in one-letter code: Ribosome maturation factor RimM (179 aa).

The region spanning 100 to 176 (KEEFHLLELI…FIIINPPNGL (77 aa)) is the PRC barrel domain.

It belongs to the RimM family. In terms of assembly, binds ribosomal protein uS19.

The protein localises to the cytoplasm. Functionally, an accessory protein needed during the final step in the assembly of 30S ribosomal subunit, possibly for assembly of the head region. Essential for efficient processing of 16S rRNA. May be needed both before and after RbfA during the maturation of 16S rRNA. It has affinity for free ribosomal 30S subunits but not for 70S ribosomes. This Prochlorococcus marinus (strain MIT 9215) protein is Ribosome maturation factor RimM.